The primary structure comprises 198 residues: NAD(P)H dehydrogenase (quinone) (198 aa).

The 186-residue stretch at 4-189 (VLVLYYSMYG…SIARYQGEYV (186 aa)) folds into the Flavodoxin-like domain. Residues 10 to 15 (SMYGHI) and 78 to 80 (TRF) contribute to the FMN site. Position 12 (Tyr-12) interacts with NAD(+). Trp-98 serves as a coordination point for substrate. FMN is bound by residues 113–118 (STGTGG) and His-133.

It belongs to the WrbA family. It depends on FMN as a cofactor.

It catalyses the reaction a quinone + NADH + H(+) = a quinol + NAD(+). It carries out the reaction a quinone + NADPH + H(+) = a quinol + NADP(+). In Escherichia fergusonii (strain ATCC 35469 / DSM 13698 / CCUG 18766 / IAM 14443 / JCM 21226 / LMG 7866 / NBRC 102419 / NCTC 12128 / CDC 0568-73), this protein is NAD(P)H dehydrogenase (quinone).